A 308-amino-acid chain; its full sequence is Acetylglutamate kinase (308 aa).

Residues 73 to 74 (GG), Arg-95, and Asn-194 contribute to the substrate site.

The protein belongs to the acetylglutamate kinase family. ArgB subfamily.

It localises to the cytoplasm. The enzyme catalyses N-acetyl-L-glutamate + ATP = N-acetyl-L-glutamyl 5-phosphate + ADP. It participates in amino-acid biosynthesis; L-arginine biosynthesis; N(2)-acetyl-L-ornithine from L-glutamate: step 2/4. Catalyzes the ATP-dependent phosphorylation of N-acetyl-L-glutamate. In Rhodococcus jostii (strain RHA1), this protein is Acetylglutamate kinase.